A 502-amino-acid polypeptide reads, in one-letter code: 2,3-bisphosphoglycerate-independent phosphoglycerate mutase (502 aa).

The Mn(2+) site is built by aspartate 13 and serine 63. The active-site Phosphoserine intermediate is the serine 63. Substrate is bound by residues histidine 117, 146-147 (RD), arginine 177, arginine 183, 251-254 (RSDR), and lysine 324. Positions 389, 393, 430, 431, and 448 each coordinate Mn(2+).

The protein belongs to the BPG-independent phosphoglycerate mutase family. Monomer. The cofactor is Mn(2+).

The enzyme catalyses (2R)-2-phosphoglycerate = (2R)-3-phosphoglycerate. It functions in the pathway carbohydrate degradation; glycolysis; pyruvate from D-glyceraldehyde 3-phosphate: step 3/5. Catalyzes the interconversion of 2-phosphoglycerate and 3-phosphoglycerate. The chain is 2,3-bisphosphoglycerate-independent phosphoglycerate mutase from Ureaplasma urealyticum serovar 10 (strain ATCC 33699 / Western).